We begin with the raw amino-acid sequence, 197 residues long: Imidazoleglycerol-phosphate dehydratase (197 aa).

It belongs to the imidazoleglycerol-phosphate dehydratase family.

The protein localises to the cytoplasm. The catalysed reaction is D-erythro-1-(imidazol-4-yl)glycerol 3-phosphate = 3-(imidazol-4-yl)-2-oxopropyl phosphate + H2O. It functions in the pathway amino-acid biosynthesis; L-histidine biosynthesis; L-histidine from 5-phospho-alpha-D-ribose 1-diphosphate: step 6/9. This is Imidazoleglycerol-phosphate dehydratase from Thermobifida fusca (strain YX).